The sequence spans 422 residues: MQVKAPRGTYDILPQDSVKWQYIEKIMRDSAESFGFRAIRTPLFEHTELFQRGVGQGTDIVSKEMYSFNDRSQRSLTLRPEGTAPCARALIEHGIYSGVMPVKWYYLGPMFRYDRPQTGRYRQFHQFGVEAFGSNSPYLDAEIIILLVEILRRLGLDDYELHLNSLGCSVCRDDYRQKLLQHISPFKEQLCQDCQQRYMQNPLRVLDCKMETCHQAIRGYPIFYDHLCPYCQEHYSRVQAALQANGISYIHDNNLVRGLDYYSNTAFEIHLPGIGAQSAVGGGGRYDGLVKELGGPDIPGIGFALGMERLLLALDMLGKSKFSNPSLDVFVVVMNDAYEMQGLQLVNELRRRGIRADKDYGGRSGKAQMKYAGKTAARFVVMVGEEEVEKHFWTLRDMQSKEQWQLGQEELISSIRSVIETK.

This sequence belongs to the class-II aminoacyl-tRNA synthetase family. In terms of assembly, homodimer.

It localises to the cytoplasm. The enzyme catalyses tRNA(His) + L-histidine + ATP = L-histidyl-tRNA(His) + AMP + diphosphate + H(+). The polypeptide is Histidine--tRNA ligase (Syntrophomonas wolfei subsp. wolfei (strain DSM 2245B / Goettingen)).